The following is a 91-amino-acid chain: Non-specific lipid-transfer protein 1 (91 aa).

Disulfide bonds link Cys4–Cys51, Cys14–Cys28, Cys29–Cys74, and Cys49–Cys88.

Belongs to the plant LTP family. Detected in seeds (at protein level).

Functionally, plant non-specific lipid-transfer proteins transfer phospholipids as well as galactolipids across membranes. May play a role in wax or cutin deposition in the cell walls of expanding epidermal cells and certain secretory tissues. In Carum carvi (Caraway), this protein is Non-specific lipid-transfer protein 1.